A 50-amino-acid chain; its full sequence is Bacteriocin BacSp222 (50 aa).

Met-1 carries the post-translational modification N-formylmethionine.

The protein localises to the secreted. Its function is as follows. Has bacteriolytic activity against Gram-positive bacteria B.subtilis, L.lactis and M.luteus and several species from genus Staphylococcus including methicillin-resistant S.aureus, with MIC values ranging from 0.11 uM to 7.8 uM. Has no activity against Gram-negative bacteria or fungi. In vitro, has a dose-dependent cytolytic effect on eukaryotic cells. The sequence is that of Bacteriocin BacSp222 from Staphylococcus pseudintermedius.